The primary structure comprises 238 residues: Triosephosphate isomerase (238 aa).

Residue 7–9 (NFK) coordinates substrate. Histidine 91 serves as the catalytic Electrophile. Catalysis depends on glutamate 158, which acts as the Proton acceptor. Substrate is bound by residues glycine 164 and serine 200.

The protein belongs to the triosephosphate isomerase family. Homodimer.

It localises to the cytoplasm. The catalysed reaction is D-glyceraldehyde 3-phosphate = dihydroxyacetone phosphate. It functions in the pathway carbohydrate biosynthesis; gluconeogenesis. The protein operates within carbohydrate degradation; glycolysis; D-glyceraldehyde 3-phosphate from glycerone phosphate: step 1/1. Its function is as follows. Involved in the gluconeogenesis. Catalyzes stereospecifically the conversion of dihydroxyacetone phosphate (DHAP) to D-glyceraldehyde-3-phosphate (G3P). This chain is Triosephosphate isomerase, found in Ureaplasma parvum serovar 3 (strain ATCC 27815 / 27 / NCTC 11736).